The sequence spans 76 residues: Small ribosomal subunit protein bS21A (76 aa).

Basic and acidic residues predominate over residues 35 to 52; it reads HYEKPSEKRAREKAEAVR. Residues 35-76 form a disordered region; sequence HYEKPSEKRAREKAEAVRRARKLARKRAQREGLVSGRPAAAR. Positions 53 to 62 are enriched in basic residues; the sequence is RARKLARKRA.

This sequence belongs to the bacterial ribosomal protein bS21 family.

In Chelativorans sp. (strain BNC1), this protein is Small ribosomal subunit protein bS21A.